Reading from the N-terminus, the 49-residue chain is Astexin-3 (49 aa).

The propeptide occupies 1-25 (MRTYNRSLPARAGLTDLGKVTTHTK). The segment at residues 26–34 (GPTPMVGLD) is a cross-link (isoaspartyl glycine isopeptide (Gly-Asp)).

This lasso peptide is hydrolyzed to a linear form by the isopeptidase AtxE2, in vitro. The isopeptidase AtxE2 only recognizes the threaded form (but not the unthreaded form).

The protein resides in the cytoplasm. It localises to the secreted. Functionally, shows weak antimicrobial activity against its phylogenetic relative Caulobacter crescentus. Does not show activity against other bacteria tested (E.coli, Vibrio sp, Burkhoderia thailandensis, and Salmonella newport). The chain is Astexin-3 from Asticcacaulis excentricus (strain ATCC 15261 / DSM 4724 / KCTC 12464 / NCIMB 9791 / VKM B-1370 / CB 48).